The primary structure comprises 242 residues: Heme exporter protein C (242 aa).

The next 6 helical transmembrane spans lie at 21–41 (PWVV…GFFF), 61–81 (AATL…IWLI), 93–113 (AAAP…AFWG), 127–147 (LTSF…WEAI), 158–178 (GVLC…AIFW), and 201–221 (WQPL…LLLL).

The protein belongs to the CcmC/CycZ/HelC family.

The protein localises to the cell inner membrane. In terms of biological role, required for the export of heme to the periplasm for the biogenesis of c-type cytochromes. This Rhodobacter capsulatus (strain ATCC BAA-309 / NBRC 16581 / SB1003) protein is Heme exporter protein C (helC).